The following is a 214-amino-acid chain: Probable GTP-binding protein EngB (214 aa).

Positions 22 to 194 constitute an EngB-type G domain; that stretch reads HLPEIAFAGR…WARIDALLEP (173 aa). GTP-binding positions include 30 to 37, 57 to 61, 75 to 78, 142 to 145, and 173 to 175; these read GRSNVGKS, GRTQL, DLPG, TKCD, and FSA. Positions 37 and 59 each coordinate Mg(2+). The disordered stretch occupies residues 195–214; the sequence is TAAETPGIPEEPAPPGPVND. The segment covering 203–214 has biased composition (pro residues); it reads PEEPAPPGPVND.

Belongs to the TRAFAC class TrmE-Era-EngA-EngB-Septin-like GTPase superfamily. EngB GTPase family. Mg(2+) is required as a cofactor.

Functionally, necessary for normal cell division and for the maintenance of normal septation. The sequence is that of Probable GTP-binding protein EngB from Geobacter sp. (strain M21).